Reading from the N-terminus, the 178-residue chain is Caveolin-1 (178 aa).

At Ser-2 the chain carries N-acetylserine. A Phosphoserine modification is found at Ser-2. A required for homooligomerization region spans residues 2–94 (SGGKYVDSEG…WKASFTTFTV (93 aa)). At 2-104 (SGGKYVDSEG…TKYWFYRLLS (103 aa)) the chain is on the cytoplasmic side. Lys-5 is subject to N6-acetyllysine; alternate. Lys-5 is covalently cross-linked (Glycyl lysine isopeptide (Lys-Gly) (interchain with G-Cter in ubiquitin); alternate). A Phosphotyrosine modification is found at Tyr-6. Phosphoserine is present on Ser-9. At Tyr-14 the chain carries Phosphotyrosine; by ABL1. Tyr-25 bears the Phosphotyrosine mark. Glycyl lysine isopeptide (Lys-Gly) (interchain with G-Cter in ubiquitin) cross-links involve residues Lys-26, Lys-30, Lys-39, Lys-47, and Lys-57. Residues 82 to 94 (DGIWKASFTTFTV) are interaction with CAVIN3. Residues 105–125 (ALFGIPMALIWGIYFAILSFL) constitute an intramembrane region (helical). Residues 126–178 (HIWAVVPCIKSFLIEIQCISRVYSIYVHTFCDPLFEAIGKIFSNIRINTQKEI) lie on the Cytoplasmic side of the membrane. The interacts with SPRY1, SPRY2, SPRY3 and SPRY4 stretch occupies residues 131 to 142 (VPCIKSFLIEIQ). S-palmitoyl cysteine attachment occurs at residues Cys-133, Cys-143, and Cys-156. The interacts with SPRY1, SPRY2, and SPRY4 stretch occupies residues 149–160 (SIYVHTFCDPLF). Positions 167 to 178 (FSNIRINTQKEI) are interacts with SPRY1, SPRY2, SPRY3 and SPRY4.

The protein belongs to the caveolin family. Homooligomer. Interacts with GLIPR2. Interacts with NOSTRIN. Interacts with SNAP25 and STX1A. Interacts (via the N-terminus) with DPP4; the interaction is direct. Interacts with CTNNB1, CDH1 and JUP. Interacts with PACSIN2; this interaction induces membrane tubulation. Interacts with SLC7A9. Interacts with BMX and BTK. Interacts with TGFBR1. Interacts with CAVIN3 (via leucine-zipper domain) in a cholesterol-sensitive manner. Interacts with CAVIN1. Interacts with EHD2 in a cholesterol-dependent manner. Forms a ternary complex with UBXN6 and VCP; mediates CAV1 targeting to lysosomes for degradation. Interacts with ABCG1; this interaction regulates ABCG1-mediated cholesterol efflux. Interacts with NEU3; this interaction enhances NEU3 sialidase activity within caveola. Interacts (via C-terminus) with SPRY1, SPRY2 (via C-terminus), SPRY3, and SPRY4. Interacts with IGFBP5; this interaction allows trafficking of IGFBP5 from the plasma membrane to the nucleus. In terms of processing, phosphorylated at Tyr-14 by ABL1 in response to oxidative stress. Ubiquitinated. Undergo monoubiquitination and multi- and/or polyubiquitination. Monoubiquitination of N-terminal lysines promotes integration in a ternary complex with UBXN6 and VCP which promotes oligomeric CAV1 targeting to lysosomes for degradation. Ubiquitinated by ZNRF1; leading to degradation and modulation of the TLR4-mediated immune response.

Its subcellular location is the golgi apparatus membrane. The protein resides in the cell membrane. The protein localises to the membrane. It is found in the caveola. It localises to the membrane raft. Its function is as follows. May act as a scaffolding protein within caveolar membranes. Forms a stable heterooligomeric complex with CAV2 that targets to lipid rafts and drives caveolae formation. Mediates the recruitment of CAVIN proteins (CAVIN1/2/3/4) to the caveolae. Interacts directly with G-protein alpha subunits and can functionally regulate their activity. Involved in the costimulatory signal essential for T-cell receptor (TCR)-mediated T-cell activation. Its binding to DPP4 induces T-cell proliferation and NF-kappa-B activation in a T-cell receptor/CD3-dependent manner. Recruits CTNNB1 to caveolar membranes and may regulate CTNNB1-mediated signaling through the Wnt pathway. Negatively regulates TGFB1-mediated activation of SMAD2/3 by mediating the internalization of TGFBR1 from membrane rafts leading to its subsequent degradation. Binds 20(S)-hydroxycholesterol (20(S)-OHC). The chain is Caveolin-1 (CAV1) from Bos taurus (Bovine).